A 282-amino-acid polypeptide reads, in one-letter code: Nucleotide-binding protein Shew_3314 (282 aa).

Position 8-15 (8-15 (GRSGSGKS)) interacts with ATP. 56–59 (DVRN) provides a ligand contact to GTP.

Belongs to the RapZ-like family.

In terms of biological role, displays ATPase and GTPase activities. The sequence is that of Nucleotide-binding protein Shew_3314 from Shewanella loihica (strain ATCC BAA-1088 / PV-4).